The chain runs to 335 residues: Rho guanine nucleotide exchange factor 39 (335 aa).

The 176-residue stretch at 22 to 197 (KRACTARELL…SETAQRVHTI (176 aa)) folds into the DH domain. Residues 227–331 (WFLRQGWLLV…WYHSLTLAIS (105 aa)) form the PH domain.

Its subcellular location is the cell membrane. In terms of biological role, promotes cell proliferation. The polypeptide is Rho guanine nucleotide exchange factor 39 (ARHGEF39) (Bos taurus (Bovine)).